The primary structure comprises 165 residues: Crossover junction endodeoxyribonuclease RuvC (165 aa).

Catalysis depends on residues aspartate 7, glutamate 68, and histidine 142. Mg(2+)-binding residues include aspartate 7, glutamate 68, and histidine 142.

Belongs to the RuvC family. Homodimer which binds Holliday junction (HJ) DNA. The HJ becomes 2-fold symmetrical on binding to RuvC with unstacked arms; it has a different conformation from HJ DNA in complex with RuvA. In the full resolvosome a probable DNA-RuvA(4)-RuvB(12)-RuvC(2) complex forms which resolves the HJ. Mg(2+) is required as a cofactor.

The protein resides in the cytoplasm. The enzyme catalyses Endonucleolytic cleavage at a junction such as a reciprocal single-stranded crossover between two homologous DNA duplexes (Holliday junction).. Functionally, the RuvA-RuvB-RuvC complex processes Holliday junction (HJ) DNA during genetic recombination and DNA repair. Endonuclease that resolves HJ intermediates. Cleaves cruciform DNA by making single-stranded nicks across the HJ at symmetrical positions within the homologous arms, yielding a 5'-phosphate and a 3'-hydroxyl group; requires a central core of homology in the junction. The consensus cleavage sequence is 5'-(A/T)TT(C/G)-3'. Cleavage occurs on the 3'-side of the TT dinucleotide at the point of strand exchange. HJ branch migration catalyzed by RuvA-RuvB allows RuvC to scan DNA until it finds its consensus sequence, where it cleaves and resolves the cruciform DNA. This chain is Crossover junction endodeoxyribonuclease RuvC, found in Anaplasma marginale (strain St. Maries).